The following is a 294-amino-acid chain: Cell division protein FtsQ (294 aa).

Residues 1 to 26 are Cytoplasmic-facing; the sequence is MARGPNRRRVDRVPGERRRRLARAMA. A helical transmembrane segment spans residues 27–49; the sequence is LALPSILALAALGGAATLGWRVG. Residues 50–294 lie on the Periplasmic side of the membrane; the sequence is WKSDLLRVRE…GPQGRSSSLR (245 aa). A POTRA domain is found at 55-123; that stretch reads LRVREIRFEG…PALEVQLAER (69 aa). The tract at residues 266–294 is disordered; it reads AGRRGEPDGRSSYAAGGGGGPQGRSSSLR.

Belongs to the FtsQ/DivIB family. FtsQ subfamily.

The protein localises to the cell inner membrane. Its function is as follows. Essential cell division protein. The chain is Cell division protein FtsQ from Anaeromyxobacter sp. (strain K).